A 1240-amino-acid chain; its full sequence is ATP-dependent helicase/nuclease subunit A (1240 aa).

Residues Ser12–Arg485 form the UvrD-like helicase ATP-binding domain. Ala33–Thr40 is an ATP binding site. A UvrD-like helicase C-terminal domain is found at Lys497–Gly804.

This sequence belongs to the helicase family. AddA subfamily. Heterodimer of AddA and AddB/RexB. Mg(2+) serves as cofactor.

The enzyme catalyses Couples ATP hydrolysis with the unwinding of duplex DNA by translocating in the 3'-5' direction.. It catalyses the reaction ATP + H2O = ADP + phosphate + H(+). Functionally, the heterodimer acts as both an ATP-dependent DNA helicase and an ATP-dependent, dual-direction single-stranded exonuclease. Recognizes the chi site generating a DNA molecule suitable for the initiation of homologous recombination. The AddA nuclease domain is required for chi fragment generation; this subunit has the helicase and 3' -&gt; 5' nuclease activities. The sequence is that of ATP-dependent helicase/nuclease subunit A from Bacillus cereus (strain AH820).